The primary structure comprises 132 residues: Small ribosomal subunit protein uS8c (132 aa).

This sequence belongs to the universal ribosomal protein uS8 family. In terms of assembly, part of the 30S ribosomal subunit.

Its subcellular location is the plastid. It is found in the chloroplast. One of the primary rRNA binding proteins, it binds directly to 16S rRNA central domain where it helps coordinate assembly of the platform of the 30S subunit. The chain is Small ribosomal subunit protein uS8c (rps8) from Ceratophyllum demersum (Rigid hornwort).